We begin with the raw amino-acid sequence, 255 residues long: 5-oxoprolinase subunit A 1 (255 aa).

Belongs to the LamB/PxpA family. Forms a complex composed of PxpA, PxpB and PxpC.

The enzyme catalyses 5-oxo-L-proline + ATP + 2 H2O = L-glutamate + ADP + phosphate + H(+). Functionally, catalyzes the cleavage of 5-oxoproline to form L-glutamate coupled to the hydrolysis of ATP to ADP and inorganic phosphate. The protein is 5-oxoprolinase subunit A 1 of Bradyrhizobium diazoefficiens (strain JCM 10833 / BCRC 13528 / IAM 13628 / NBRC 14792 / USDA 110).